The chain runs to 398 residues: Nucleotide-sugar uncharacterized transporter 2 (398 aa).

Helical transmembrane passes span 54–74 (FCGP…IILA), 84–104 (FNFP…LLAF), 119–139 (TTPF…SGLA), 150–170 (FYQM…FVLF), 179–199 (VMAL…DLEF), 201–221 (LFGA…KILW), 242–262 (FTVF…VLLF), 271–291 (AILI…LALG), 299–319 (VVLG…IFGS), and 322–342 (GFIS…YTWL).

This sequence belongs to the TPT transporter family. TPT (TC 2.A.7.9) subfamily.

It is found in the membrane. The protein is Nucleotide-sugar uncharacterized transporter 2 of Arabidopsis thaliana (Mouse-ear cress).